The sequence spans 635 residues: MASKPGPLTQWPWNNLGNYKYALVAPSAAYSTYRFVTASSAAERDLLNFMVFPMLLLRLLYGQLWITVSRHQTARSKHKIVNKSLDFEQIDRERNWDDQIILTALVFYLVSATMPQAQVAPWWSTKGMVVTAVLHAGPVEFLYYWLHRALHHHWLYARYHSHHHASIVTEPITSVIHPFAEEVVYFVLLAIPILSTVATGTVSVVTANGYLVYIDFMNYLGHCNFELVPKCLFHVFPPLKYLLYTPSFHSLHHTQFRTNYSLFMPVYDYIYGTTDKSSDELYERTLQGRDEAAWRPDVVHLTHLTAPESVFHNRLGFAAVASNPLGAAASGHLLRAASAVASPLLSLFASTFRSEANRLDKLNIETWVIPRFTSHYTSKSDGYKVSRLIEKAVSDAEASGARVLTLGLLNQGYDLNRNGELYVVRKPSLKTKIVDGTSLAVAAVLNMIPQGTKDVLLLGNANKISLVLTLSLCKREIQVRMVNKELYECLKQQLQPEMQEHLVLSRSYSSKVWLVGDGVTDEEQMKAQKGSHFVPYSQFPPNKARNDCVYHCTPALLVPESFENLHVCENWLPRRVMSAWRAAGIVHALEKWDGHECGGRVTGVQKAWSAALARGFRPYDDHHHPGITHDGRGGL.

The next 4 helical transmembrane spans lie at 46–66 (LLNF…QLWI), 100–120 (IILT…AQVA), 127–147 (GMVV…YWLH), and 183–203 (VVYF…GTVS). Residues 139-273 (VEFLYYWLHR…MPVYDYIYGT (135 aa)) form the Fatty acid hydroxylase domain.

The protein belongs to the sterol desaturase family. Homodimer.

The protein resides in the endoplasmic reticulum membrane. The enzyme catalyses a long-chain fatty aldehyde + 2 NADPH + O2 + H(+) = a long-chain alkane + formate + 2 NADP(+) + H2O. Its function is as follows. Aldehyde decarbonylase involved in the conversion of aldehydes to alkanes. Core component of a very-long-chain alkane synthesis complex. This Oryza sativa subsp. indica (Rice) protein is Very-long-chain aldehyde decarbonylase GL1-6.